The sequence spans 288 residues: Fructokinase (288 aa).

An ATP-binding site is contributed by threonine 131. Residues histidine 154, cysteine 169, histidine 172, and cysteine 175 each contribute to the Zn(2+) site. ATP-binding positions include proline 183 and 231–235; that span reads GVMNQ.

This sequence belongs to the ROK (NagC/XylR) family. Requires Mg(2+) as cofactor.

It catalyses the reaction D-fructose + ATP = D-fructose 6-phosphate + ADP + H(+). Inhibition by zinc ions. This is Fructokinase (scrK) from Pediococcus pentosaceus.